A 37-amino-acid chain; its full sequence is MIEVFLFGIVLGLIPVTLAGLFVTAYLQYRRGDQSDL.

A helical membrane pass occupies residues 5–25 (FLFGIVLGLIPVTLAGLFVTA).

This sequence belongs to the PetG family. In terms of assembly, the 4 large subunits of the cytochrome b6-f complex are cytochrome b6, subunit IV (17 kDa polypeptide, PetD), cytochrome f and the Rieske protein, while the 4 small subunits are PetG, PetL, PetM and PetN. The complex functions as a dimer.

It is found in the plastid. The protein resides in the chloroplast thylakoid membrane. Component of the cytochrome b6-f complex, which mediates electron transfer between photosystem II (PSII) and photosystem I (PSI), cyclic electron flow around PSI, and state transitions. PetG is required for either the stability or assembly of the cytochrome b6-f complex. This Daucus carota (Wild carrot) protein is Cytochrome b6-f complex subunit 5.